A 310-amino-acid polypeptide reads, in one-letter code: Proline iminopeptidase (310 aa).

The AB hydrolase-1 domain maps to 33–290; it reads PVIFLHGGPG…RVVQAGHRAF (258 aa). Residue Ser107 is the Nucleophile of the active site. Asp260 is an active-site residue. His287 (proton donor) is an active-site residue.

Belongs to the peptidase S33 family.

It is found in the cytoplasm. It catalyses the reaction Release of N-terminal proline from a peptide.. Specifically catalyzes the removal of N-terminal proline residues from peptides. The chain is Proline iminopeptidase (pip) from Neisseria meningitidis serogroup A / serotype 4A (strain DSM 15465 / Z2491).